The chain runs to 319 residues: Serine acetyltransferase, plasmid (319 aa).

This sequence belongs to the transferase hexapeptide repeat family.

The protein localises to the cytoplasm. The catalysed reaction is L-serine + acetyl-CoA = O-acetyl-L-serine + CoA. It functions in the pathway amino-acid biosynthesis; L-cysteine biosynthesis; L-cysteine from L-serine: step 1/2. The sequence is that of Serine acetyltransferase, plasmid (srpH) from Synechococcus elongatus (strain ATCC 33912 / PCC 7942 / FACHB-805) (Anacystis nidulans R2).